The primary structure comprises 43 residues: uncharacterized protein (43 aa).

Residues 1–17 (MYRRLLLNLFCMVFLQA) form the signal peptide.

This is an uncharacterized protein from Helicobacter pylori (strain J99 / ATCC 700824) (Campylobacter pylori J99).